Consider the following 94-residue polypeptide: Integration host factor subunit beta (94 aa).

Belongs to the bacterial histone-like protein family. In terms of assembly, heterodimer of an alpha and a beta chain.

Functionally, this protein is one of the two subunits of integration host factor, a specific DNA-binding protein that functions in genetic recombination as well as in transcriptional and translational control. This is Integration host factor subunit beta (ihfB) from Serratia marcescens.